The sequence spans 510 residues: Sucrose transport protein SUC4 (510 aa).

Positions 1–34 (MATSDQDRRHRVTRNRPPIARPSTSSSRPVVSPP) are disordered. Over 1 to 45 (MATSDQDRRHRVTRNRPPIARPSTSSSRPVVSPPRSKVSKRVLLR) the chain is Cytoplasmic. The segment covering 21–34 (RPSTSSSRPVVSPP) has biased composition (low complexity). Ser-23 bears the Phosphoserine mark. A helical transmembrane segment spans residues 46–66 (VASVACGIQFGWALQLSLLTP). Residues 67 to 71 (YVQEL) lie on the Extracellular side of the membrane. Residues 72–92 (GIPHAWASVIWLCGPLSGLFV) form a helical membrane-spanning segment. The Cytoplasmic segment spans residues 93–111 (QPLVGHSSDRCTSKYGRRR). Residues 112 to 132 (PFIVAGAVAISISVMVIGHAA) form a helical membrane-spanning segment. The Extracellular portion of the chain corresponds to 133–148 (DIGWAFGDREGKIKPR). The helical transmembrane segment at 149-169 (AIVAFVLGFWILDVANNMTQG) threads the bilayer. The Cytoplasmic segment spans residues 170-187 (PCRALLADLTENDNRRTR). Residues 188–208 (VANGYFSLFMAVGNVLGYATG) traverse the membrane as a helical segment. Residues 209 to 233 (SYNGWYKIFTFTKTVACNVECANLK) are Extracellular-facing. The helical transmembrane segment at 234–254 (SAFYIDVVFIAITTILSVSAA) threads the bilayer. The Cytoplasmic segment spans residues 255-291 (HEVPLASLASEAHGQTSGTDEAFLSEIFGTFRYFPGN). A helical transmembrane segment spans residues 292 to 312 (VWIILLVTALTWIGWFPFILF). Over 313 to 335 (DTDWMGREIYGGEPNIGTSYSAG) the chain is Extracellular. The helical transmembrane segment at 336–356 (VSMGALGLMLNSVFLGITSVL) threads the bilayer. Topologically, residues 357–365 (MEKLCRKWG) are cytoplasmic. The helical transmembrane segment at 366–386 (AGFVWGISNILMAICFLGMII) threads the bilayer. The Extracellular portion of the chain corresponds to 387 to 402 (TSFVASHLGYIGHEQP). The chain crosses the membrane as a helical span at residues 403–423 (PASIVFAAVLIFTILGIPLAI). The Cytoplasmic portion of the chain corresponds to 424-443 (TYSVPYALISIRIESLGLGQ). A helical transmembrane segment spans residues 444-464 (GLSLGVLNLAIVIPQVIVSVG). Residues 465 to 477 (SGPWDQLFGGGNS) lie on the Extracellular side of the membrane. The helical transmembrane segment at 478–498 (PALAVGAATGFIGGIVAILAL) threads the bilayer. Residues 499–510 (PRTRIQKPIPLP) are Cytoplasmic-facing.

This sequence belongs to the glycoside-pentoside-hexuronide (GPH) cation symporter transporter (TC 2.A.2.4) family. Homodimer. Interacts with SUC2 and SUC3. In terms of tissue distribution, expressed in sink tissues, mostly in minor veins of sink leaves. Localized in companion cells.

The protein resides in the cell membrane. The catalysed reaction is sucrose(out) + H(+)(out) = sucrose(in) + H(+)(in). It functions in the pathway glycan biosynthesis; sucrose metabolism. In terms of biological role, responsible for the transport of sucrose into the cell, with the concomitant uptake of protons (symport system). Can also transport maltose at a lesser rate. May also transport biotin. The protein is Sucrose transport protein SUC4 of Arabidopsis thaliana (Mouse-ear cress).